Consider the following 485-residue polypeptide: Glycogen synthase (485 aa).

Lys-17 is a binding site for ADP-alpha-D-glucose.

It belongs to the glycosyltransferase 1 family. Bacterial/plant glycogen synthase subfamily.

The catalysed reaction is [(1-&gt;4)-alpha-D-glucosyl](n) + ADP-alpha-D-glucose = [(1-&gt;4)-alpha-D-glucosyl](n+1) + ADP + H(+). It participates in glycan biosynthesis; glycogen biosynthesis. Functionally, synthesizes alpha-1,4-glucan chains using ADP-glucose. This Novosphingobium aromaticivorans (strain ATCC 700278 / DSM 12444 / CCUG 56034 / CIP 105152 / NBRC 16084 / F199) protein is Glycogen synthase.